The sequence spans 459 residues: Probable 1,4-beta-D-glucan cellobiohydrolase C (459 aa).

A signal peptide spans 1 to 18 (MHYPLSLALAFLPFGIQA). The CBM1 domain maps to 19 to 54 (QQTLWGQCGGQGYSGATSCVAGATCATVNEYYAQCT). Cystine bridges form between Cys26/Cys43 and Cys37/Cys53. Positions 54–94 (TPAAGTSSATTLKTTTSSTTAAVTTTTTTQSPTGSASPTTT) are thr-rich linker. Residues 76-97 (VTTTTTTQSPTGSASPTTTASA) form a disordered region. The interval 95–459 (ASASGNPFSG…QLLTNANPAF (365 aa)) is catalytic. Asp189 is an active-site residue. A disulfide bridge links Cys190 with Cys249. The Proton donor role is filled by Asp235. Asn303 carries an N-linked (GlcNAc...) asparagine glycan. A disulfide bond links Cys381 and Cys428. Asp414 (nucleophile) is an active-site residue.

Belongs to the glycosyl hydrolase 6 (cellulase B) family.

It is found in the secreted. It catalyses the reaction Hydrolysis of (1-&gt;4)-beta-D-glucosidic linkages in cellulose and cellotetraose, releasing cellobiose from the non-reducing ends of the chains.. Functionally, the biological conversion of cellulose to glucose generally requires three types of hydrolytic enzymes: (1) Endoglucanases which cut internal beta-1,4-glucosidic bonds; (2) Exocellobiohydrolases that cut the disaccharide cellobiose from the non-reducing end of the cellulose polymer chain; (3) Beta-1,4-glucosidases which hydrolyze the cellobiose and other short cello-oligosaccharides to glucose. In Aspergillus niger (strain ATCC MYA-4892 / CBS 513.88 / FGSC A1513), this protein is Probable 1,4-beta-D-glucan cellobiohydrolase C (cbhC).